Here is a 208-residue protein sequence, read N- to C-terminus: 3-demethoxyubiquinol 3-hydroxylase (208 aa).

Glu-57, Glu-87, His-90, Glu-139, Glu-171, and His-174 together coordinate Fe cation.

Belongs to the COQ7 family. The cofactor is Fe cation.

Its subcellular location is the cell membrane. It carries out the reaction a 5-methoxy-2-methyl-3-(all-trans-polyprenyl)benzene-1,4-diol + AH2 + O2 = a 3-demethylubiquinol + A + H2O. It participates in cofactor biosynthesis; ubiquinone biosynthesis. Functionally, catalyzes the hydroxylation of 2-nonaprenyl-3-methyl-6-methoxy-1,4-benzoquinol during ubiquinone biosynthesis. The polypeptide is 3-demethoxyubiquinol 3-hydroxylase (Burkholderia ambifaria (strain ATCC BAA-244 / DSM 16087 / CCUG 44356 / LMG 19182 / AMMD) (Burkholderia cepacia (strain AMMD))).